The sequence spans 325 residues: Delta(1)-pyrroline-2-carboxylate reductase (325 aa).

This sequence belongs to the ornithine cyclodeaminase/mu-crystallin family.

It catalyses the reaction L-proline + NAD(+) = 1-pyrroline-2-carboxylate + NADH + H(+). The enzyme catalyses L-proline + NADP(+) = 1-pyrroline-2-carboxylate + NADPH + H(+). Functionally, catalyzes the reduction of Delta(1)-pyrroline-2-carboxylate (Pyr2C) to L-proline, using preferentially NADPH over NADH as the electron donor. Is likely involved in a degradation pathway that converts trans-3-hydroxy-L-proline (t3LHyp) to L-proline. The chain is Delta(1)-pyrroline-2-carboxylate reductase from Bacillus cereus (strain ATCC 10987 / NRS 248).